A 75-amino-acid polypeptide reads, in one-letter code: Protein Tlp homolog (75 aa).

Positions 53–75 are disordered; that stretch reads REALDGMREEIKDEARDKKNGYM.

Belongs to the Tlp family.

This Clostridium botulinum (strain ATCC 19397 / Type A) protein is Protein Tlp homolog.